A 375-amino-acid polypeptide reads, in one-letter code: Secreted LysM effector Vd4LysM (375 aa).

An N-terminal signal peptide occupies residues 1-24; sequence MPSVTISSTMLAGLLLMLVPASSA. Residues 57–104 enclose the LysM 1 domain; it reads SWWWDNEGQIPCANMPAEWGITMQDFLRWNPSITSSCGNFLNGRSYCV. Residues 108–139 are disordered; the sequence is GEEPPVPGTPTTTTAPATTTKPSNGITTPQPI. The segment covering 116 to 129 has biased composition (low complexity); that stretch reads TPTTTTAPATTTKP. Positions 149-195 constitute a LysM 2 domain; it reads KFHYISEGDRCQDILSYQKITLADFFKWNPAVKSDCSGLWSKTNACV. The span at 206-217 shows a compositional bias: low complexity; the sequence is TTTTKPATPTTP. Positions 206–225 are disordered; sequence TTTTKPATPTTPSNGITTPQ. One can recognise a LysM 3 domain in the interval 237–283; that stretch reads KFHYISEGDRCQDILSYQKITQADFFKWNPAVKSDCSGLWSKTHACV. The segment at 287-317 is disordered; it reads GGQAPPPTPTTTKPTTTKPPGNGVTTPTPTQ. A compositionally biased stretch (low complexity) spans 296-317; sequence TTTKPTTTKPPGNGVTTPTPTQ. The LysM 4 domain occupies 326–372; the sequence is KFHFVSPGNTCQQIVSYQKITMANFVKWNSGAGSGCNNLWGNTHACV.

It belongs to the secreted LysM effector family.

Its function is as follows. Might have a role in sequestration of chitin oligosaccharides (breakdown products of fungal cell walls that are released during invasion and act as triggers of host immunity) to dampen host defense. Does not play an important role during host colonization. In Verticillium dahliae (strain VdLs.17 / ATCC MYA-4575 / FGSC 10137) (Verticillium wilt), this protein is Secreted LysM effector Vd4LysM.